The following is a 404-amino-acid chain: UPF0261 protein CTC_01794 (404 aa).

This sequence belongs to the UPF0261 family.

The polypeptide is UPF0261 protein CTC_01794 (Clostridium tetani (strain Massachusetts / E88)).